Consider the following 291-residue polypeptide: Translocon-associated protein subunit alpha (291 aa).

An N-terminal signal peptide occupies residues 1-20 (MRLLPRLLLLLLLVFPATVL). The Lumenal segment spans residues 21-207 (FRGGPRGSLA…EREDGLDGET (187 aa)). Residues 34–83 (DLTEDEETVEDSIIEDEDDEAEVEEDEPTDLVEDKEEEDVSGEPEASPSA) form a disordered region. Residues 35–75 (LTEDEETVEDSIIEDEDDEAEVEEDEPTDLVEDKEEEDVSG) are compositionally biased toward acidic residues. N-linked (GlcNAc...) asparagine glycosylation is found at Asn-136 and Asn-191. A helical membrane pass occupies residues 208–228 (IFMYMFLAGLGLLVIVGLHQL). The Cytoplasmic segment spans residues 229–291 (LESRKRKRPV…AQKRSVGSDE (63 aa)). At Ser-247 the chain carries Phosphoserine. A Phosphothreonine modification is found at Thr-260. A disordered region spans residues 263-291 (QIMQSRRDKASPRRLPRKRAQKRSVGSDE). At Ser-273 the chain carries Phosphoserine. Positions 274–284 (PRRLPRKRAQK) are enriched in basic residues.

This sequence belongs to the TRAP-alpha family. As to quaternary structure, heterotetramer of TRAP-alpha, TRAP-beta, TRAP-delta and TRAP-gamma. Interacts with palmitoylated calnexin (CALX), the interaction is required for efficient folding of glycosylated proteins. In terms of processing, phosphorylated in its cytoplasmic tail.

It is found in the endoplasmic reticulum membrane. Functionally, TRAP proteins are part of a complex whose function is to bind calcium to the ER membrane and thereby regulate the retention of ER resident proteins. May be involved in the recycling of the translocation apparatus after completion of the translocation process or may function as a membrane-bound chaperone facilitating folding of translocated proteins. The chain is Translocon-associated protein subunit alpha (SSR1) from Pongo abelii (Sumatran orangutan).